Consider the following 413-residue polypeptide: CinA-like protein (413 aa).

The protein belongs to the CinA family.

The polypeptide is CinA-like protein (Geobacter sulfurreducens (strain ATCC 51573 / DSM 12127 / PCA)).